Here is a 317-residue protein sequence, read N- to C-terminus: Protoheme IX farnesyltransferase (317 aa).

Helical transmembrane passes span 39–59 (VLYL…GGIN), 60–80 (PILG…AGAI), 109–129 (GALA…WLAT), 131–151 (LLAA…YTMW), 160–180 (IVIG…AATG), 184–204 (LLPV…FWAL), 249–269 (VLHL…LAFV), and 297–317 (FKFS…DHLV).

The protein belongs to the UbiA prenyltransferase family. Protoheme IX farnesyltransferase subfamily.

Its subcellular location is the cell inner membrane. The enzyme catalyses heme b + (2E,6E)-farnesyl diphosphate + H2O = Fe(II)-heme o + diphosphate. The protein operates within porphyrin-containing compound metabolism; heme O biosynthesis; heme O from protoheme: step 1/1. In terms of biological role, converts heme B (protoheme IX) to heme O by substitution of the vinyl group on carbon 2 of heme B porphyrin ring with a hydroxyethyl farnesyl side group. This is Protoheme IX farnesyltransferase from Acidiphilium cryptum (strain JF-5).